Reading from the N-terminus, the 426-residue chain is MPVLLKMSVSITFLRPFARVLVPFTLHRKRRVLYSTIMQRYMSSKIPAASYPNKESTPPSEELELDRWKITMKSSVQEEDVSTATSSEDEDPLAATRELVEMWRLLGKEVPEHFSEEELKTLMECVSKSSKRKYLKYLYIKEKMKKARQIKKEMKKAEKEEPKKDQLPETIKEDKQQNFLFLRLWDRNMDIAMGWKGAQAMQFGQPLVFDMAYDDHMKPKELQNAVSQLLESEGCNRRNVDPFHIYFCNLKTGGAYYKELVKRYGEKWNKLLLTATEKSHVDLFPKDSIIYLTADSPNVMTTFKHDKIYIVGSFVDKNMQPGTSLAKAKRLKLATECLPLDKYLQWDTGTKNLTLDQMMRILLCLKNTGSWEEALKFVPSRKHAGYLEISQHSQEFLNRMKKSKTFNSFPRGSINRHRKSSLKENI.

Residues 1-41 (MPVLLKMSVSITFLRPFARVLVPFTLHRKRRVLYSTIMQRY) constitute a mitochondrion transit peptide. Position 86 is a phosphoserine (Ser-86). The stretch at 138–166 (LYIKEKMKKARQIKKEMKKAEKEEPKKDQ) forms a coiled coil. An SAM-dependent MTase TRM10-type domain is found at 193-385 (MGWKGAQAMQ…KFVPSRKHAG (193 aa)).

This sequence belongs to the class IV-like SAM-binding methyltransferase superfamily. TRM10 family. As to quaternary structure, component of mitochondrial ribonuclease P, a complex composed of TRMT10C/MRPP1, HSD17B10/MRPP2 and PRORP/MRPP3. Interacts with HSD17B10/MRPP2; forming the MRPP1-MRPP2 subcomplex of the mitochondrial ribonuclease P complex. Interacts with GRSF1.

It localises to the mitochondrion matrix. The protein resides in the mitochondrion nucleoid. It carries out the reaction adenosine(9) in tRNA + S-adenosyl-L-methionine = N(1)-methyladenosine(9) in tRNA + S-adenosyl-L-homocysteine + H(+). It catalyses the reaction guanosine(9) in tRNA + S-adenosyl-L-methionine = N(1)-methylguanosine(9) in tRNA + S-adenosyl-L-homocysteine + H(+). The catalysed reaction is an adenosine in mRNA + S-adenosyl-L-methionine = an N(1)-methyladenosine in mRNA + S-adenosyl-L-homocysteine + H(+). In terms of biological role, mitochondrial tRNA N(1)-methyltransferase involved in mitochondrial tRNA maturation. Component of mitochondrial ribonuclease P, a complex composed of TRMT10C/MRPP1, HSD17B10/MRPP2 and PRORP/MRPP3, which cleaves tRNA molecules in their 5'-ends. Together with HSD17B10/MRPP2, forms a subcomplex of the mitochondrial ribonuclease P, named MRPP1-MRPP2 subcomplex, which displays functions that are independent of the ribonuclease P activity. The MRPP1-MRPP2 subcomplex catalyzes the formation of N(1)-methylguanine and N(1)-methyladenine at position 9 (m1G9 and m1A9, respectively) in tRNAs; TRMT10C/MRPP1 acting as the catalytic N(1)-methyltransferase subunit. The MRPP1-MRPP2 subcomplex also acts as a tRNA maturation platform: following 5'-end cleavage by the mitochondrial ribonuclease P complex, the MRPP1-MRPP2 subcomplex enhances the efficiency of 3'-processing catalyzed by ELAC2, retains the tRNA product after ELAC2 processing and presents the nascent tRNA to the mitochondrial CCA tRNA nucleotidyltransferase TRNT1 enzyme. In addition to tRNA N(1)-methyltransferase activity, TRMT10C/MRPP1 also acts as a mRNA N(1)-methyltransferase by mediating methylation of adenosine residues at the N(1) position of MT-ND5 mRNA. Associates with mitochondrial DNA complexes at the nucleoids to initiate RNA processing and ribosome assembly. The sequence is that of tRNA methyltransferase 10 homolog C from Bos taurus (Bovine).